Reading from the N-terminus, the 208-residue chain is Urease accessory protein UreG (208 aa).

Gly-10–Thr-17 is a binding site for GTP.

This sequence belongs to the SIMIBI class G3E GTPase family. UreG subfamily. As to quaternary structure, homodimer. UreD, UreF and UreG form a complex that acts as a GTP-hydrolysis-dependent molecular chaperone, activating the urease apoprotein by helping to assemble the nickel containing metallocenter of UreC. The UreE protein probably delivers the nickel.

The protein localises to the cytoplasm. Its function is as follows. Facilitates the functional incorporation of the urease nickel metallocenter. This process requires GTP hydrolysis, probably effectuated by UreG. This Halalkalibacterium halodurans (strain ATCC BAA-125 / DSM 18197 / FERM 7344 / JCM 9153 / C-125) (Bacillus halodurans) protein is Urease accessory protein UreG.